A 515-amino-acid chain; its full sequence is GMP synthase [glutamine-hydrolyzing] (515 aa).

In terms of domain architecture, Glutamine amidotransferase type-1 spans 10 to 200; sequence TIIVLDFGSQ…VFGVCGCSEG (191 aa). Residue cysteine 87 is the Nucleophile of the active site. Catalysis depends on residues histidine 174 and glutamate 176. In terms of domain architecture, GMPS ATP-PPase spans 201–390; sequence WNMENFIEVE…LGIPDEIVWR (190 aa). Position 228–234 (228–234) interacts with ATP; the sequence is SGGVDSS.

As to quaternary structure, homodimer.

The enzyme catalyses XMP + L-glutamine + ATP + H2O = GMP + L-glutamate + AMP + diphosphate + 2 H(+). It participates in purine metabolism; GMP biosynthesis; GMP from XMP (L-Gln route): step 1/1. Its function is as follows. Catalyzes the synthesis of GMP from XMP. This chain is GMP synthase [glutamine-hydrolyzing], found in Bacillus anthracis (strain A0248).